The following is a 330-amino-acid chain: Ribosomal RNA small subunit methyltransferase C (330 aa).

Belongs to the methyltransferase superfamily. RsmC family. In terms of assembly, monomer.

It is found in the cytoplasm. The catalysed reaction is guanosine(1207) in 16S rRNA + S-adenosyl-L-methionine = N(2)-methylguanosine(1207) in 16S rRNA + S-adenosyl-L-homocysteine + H(+). Its function is as follows. Specifically methylates the guanine in position 1207 of 16S rRNA in the 30S particle. The protein is Ribosomal RNA small subunit methyltransferase C of Haemophilus influenzae (strain PittGG).